The chain runs to 395 residues: Demethylmacrocin O-methyltransferase (395 aa).

The enzyme catalyses demethylmacrocin + S-adenosyl-L-methionine = macrocin + S-adenosyl-L-homocysteine + H(+). It functions in the pathway antibiotic biosynthesis; tylosin biosynthesis. Its function is as follows. O-methyltransferase that catalyzes the conversion of demethylmacrocin to macrocin, the penultimate step of tylosin antibiotic biosynthesis. Also able to mediate the conversion of demethyllactenocin to lactenocin. This Streptomyces fradiae (Streptomyces roseoflavus) protein is Demethylmacrocin O-methyltransferase (tylE).